A 250-amino-acid chain; its full sequence is Dimethyl sulfide dehydrogenase assembly chaperone protein (250 aa).

Positions 231 to 250 are disordered; that stretch reads SAEARSDSAPDAAAHQNLWG.

The protein belongs to the type II DMSO reductase enzyme chaperone family.

It localises to the cytoplasm. Functionally, may function as a system-specific chaperone protein essential for the assembly of an active dimethyl sulfide dehydrogenase DdhABC. This is Dimethyl sulfide dehydrogenase assembly chaperone protein (ddhD) from Rhodovulum sulfidophilum (Rhodobacter sulfidophilus).